The following is a 99-amino-acid chain: Small ribosomal subunit protein bS20 (99 aa).

It belongs to the bacterial ribosomal protein bS20 family.

In terms of biological role, binds directly to 16S ribosomal RNA. In Thermotoga neapolitana (strain ATCC 49049 / DSM 4359 / NBRC 107923 / NS-E), this protein is Small ribosomal subunit protein bS20.